Consider the following 118-residue polypeptide: uncharacterized protein (118 aa).

A compositionally biased stretch (polar residues) spans 1 to 12; that stretch reads MADDNVSFTDQG. The segment at 1–63 is disordered; the sequence is MADDNVSFTD…KKGKTKKVRK (63 aa). Over residues 39-63 the composition is skewed to basic residues; the sequence is TKKKGKKNKKSKKKAKKGKTKKVRK. A helical transmembrane segment spans residues 81–101; the sequence is FCAGIIVAMIMLFVIIIYGII.

It is found in the membrane. This is an uncharacterized protein from Caenorhabditis elegans.